The primary structure comprises 199 residues: Probable thymidylate kinase (199 aa).

Residue 9 to 16 (GIDGCGKT) coordinates ATP.

It belongs to the thymidylate kinase family.

It catalyses the reaction dTMP + ATP = dTDP + ADP. In Methanococcus maripaludis (strain C7 / ATCC BAA-1331), this protein is Probable thymidylate kinase.